We begin with the raw amino-acid sequence, 427 residues long: Light-independent protochlorophyllide reductase subunit N (427 aa).

[4Fe-4S] cluster contacts are provided by cysteine 28, cysteine 53, and cysteine 114.

The protein belongs to the BchN/ChlN family. Protochlorophyllide reductase is composed of three subunits; BchL, BchN and BchB. Forms a heterotetramer of two BchB and two BchN subunits. [4Fe-4S] cluster serves as cofactor.

The catalysed reaction is chlorophyllide a + oxidized 2[4Fe-4S]-[ferredoxin] + 2 ADP + 2 phosphate = protochlorophyllide a + reduced 2[4Fe-4S]-[ferredoxin] + 2 ATP + 2 H2O. The protein operates within porphyrin-containing compound metabolism; bacteriochlorophyll biosynthesis (light-independent). Component of the dark-operative protochlorophyllide reductase (DPOR) that uses Mg-ATP and reduced ferredoxin to reduce ring D of protochlorophyllide (Pchlide) to form chlorophyllide a (Chlide). This reaction is light-independent. The NB-protein (BchN-BchB) is the catalytic component of the complex. This chain is Light-independent protochlorophyllide reductase subunit N, found in Jannaschia sp. (strain CCS1).